The primary structure comprises 357 residues: Phenylalanine--tRNA ligase alpha subunit (357 aa).

A Mg(2+)-binding site is contributed by Glu257.

The protein belongs to the class-II aminoacyl-tRNA synthetase family. Phe-tRNA synthetase alpha subunit type 1 subfamily. Tetramer of two alpha and two beta subunits. The cofactor is Mg(2+).

Its subcellular location is the cytoplasm. The enzyme catalyses tRNA(Phe) + L-phenylalanine + ATP = L-phenylalanyl-tRNA(Phe) + AMP + diphosphate + H(+). In Ruegeria pomeroyi (strain ATCC 700808 / DSM 15171 / DSS-3) (Silicibacter pomeroyi), this protein is Phenylalanine--tRNA ligase alpha subunit.